Here is a 190-residue protein sequence, read N- to C-terminus: CASP-like protein 5A3 (190 aa).

Low complexity-rich tracts occupy residues 1–12 and 20–31; these read MRASRPAVHPVE and AAAEGPEAQVEG. The interval 1-31 is disordered; that stretch reads MRASRPAVHPVEAAPPPPAAAAEGPEAQVEG. Residues 1 to 50 lie on the Cytoplasmic side of the membrane; sequence MRASRPAVHPVEAAPPPPAAAAEGPEAQVEGAAHPRGVRMKDPPGAPGTP. The chain crosses the membrane as a helical span at residues 51-71; that stretch reads AGLGLRLAQAFFAAAALAVMA. The Extracellular segment spans residues 72-81; the sequence is STNDFPSVSA. A helical transmembrane segment spans residues 82–102; sequence FSYLVAAAILQCLWSLLLAFV. Topologically, residues 103–126 are cytoplasmic; that stretch reads DIYALLVKRSLRNARAVCIFTIGD. Residues 127–147 traverse the membrane as a helical segment; that stretch reads GITGTITLGAACASAGITVLI. Over 148 to 164 the chain is Extracellular; it reads GNDLNICAENHCASFET. A helical membrane pass occupies residues 165-185; it reads ATALAFISWFALAPSCILNFW. Residues 186–190 lie on the Cytoplasmic side of the membrane; it reads SMASR.

Belongs to the Casparian strip membrane proteins (CASP) family. As to quaternary structure, homodimer and heterodimers.

The protein localises to the cell membrane. The chain is CASP-like protein 5A3 from Zea mays (Maize).